The primary structure comprises 694 residues: Glycine--tRNA ligase beta subunit (694 aa).

Belongs to the class-II aminoacyl-tRNA synthetase family. In terms of assembly, tetramer of two alpha and two beta subunits.

Its subcellular location is the cytoplasm. The enzyme catalyses tRNA(Gly) + glycine + ATP = glycyl-tRNA(Gly) + AMP + diphosphate. This is Glycine--tRNA ligase beta subunit from Acidithiobacillus ferrooxidans (strain ATCC 23270 / DSM 14882 / CIP 104768 / NCIMB 8455) (Ferrobacillus ferrooxidans (strain ATCC 23270)).